The chain runs to 84 residues: ORF8b protein (84 aa).

The region spanning 1–82 is the SARS ORF8 Ig-like domain; that stretch reads MCLKILVRYN…RDVLVVLNKR (82 aa). Cysteine 22 and cysteine 40 are oxidised to a cystine.

The protein localises to the host cytoplasm. Its subcellular location is the host nucleus. Functionally, non-structural protein which is dispensable for virus replication in cell culture. This is ORF8b protein from Severe acute respiratory syndrome coronavirus (SARS-CoV).